Consider the following 93-residue polypeptide: Small ribosomal subunit protein uS19 (93 aa).

The protein belongs to the universal ribosomal protein uS19 family.

Protein S19 forms a complex with S13 that binds strongly to the 16S ribosomal RNA. The sequence is that of Small ribosomal subunit protein uS19 from Microcystis aeruginosa (strain NIES-843 / IAM M-2473).